A 217-amino-acid chain; its full sequence is ATP-dependent Clp protease proteolytic subunit 2 (217 aa).

Ser113 serves as the catalytic Nucleophile. His138 is an active-site residue.

The protein belongs to the peptidase S14 family. Fourteen ClpP subunits assemble into 2 heptameric rings which stack back to back to give a disk-like structure with a central cavity, resembling the structure of eukaryotic proteasomes.

It is found in the cytoplasm. The enzyme catalyses Hydrolysis of proteins to small peptides in the presence of ATP and magnesium. alpha-casein is the usual test substrate. In the absence of ATP, only oligopeptides shorter than five residues are hydrolyzed (such as succinyl-Leu-Tyr-|-NHMec, and Leu-Tyr-Leu-|-Tyr-Trp, in which cleavage of the -Tyr-|-Leu- and -Tyr-|-Trp bonds also occurs).. Functionally, cleaves peptides in various proteins in a process that requires ATP hydrolysis. Has a chymotrypsin-like activity. Plays a major role in the degradation of misfolded proteins. This Frankia casuarinae (strain DSM 45818 / CECT 9043 / HFP020203 / CcI3) protein is ATP-dependent Clp protease proteolytic subunit 2.